A 78-amino-acid chain; its full sequence is Probable [Fe-S]-dependent transcriptional repressor (78 aa).

Residues Cys-56, Cys-61, Cys-64, and Cys-70 each coordinate iron-sulfur cluster.

The protein belongs to the FeoC family.

In terms of biological role, may function as a transcriptional regulator that controls feoABC expression. This chain is Probable [Fe-S]-dependent transcriptional repressor, found in Cronobacter sakazakii (strain ATCC BAA-894) (Enterobacter sakazakii).